The chain runs to 233 residues: Pre-hexon-linking protein VIII (233 aa).

Threonine 64 carries the post-translational modification Phosphothreonine; by host. Residues 112–163 constitute a propeptide that is removed on maturation; that stretch reads ARHVRFRDRPSPYSSGSIKRLIIRGRGIQLNDEVVSSSTGPRPDGVFQLGGA. The residue at position 180 (serine 180) is a Phosphoserine; by host.

This sequence belongs to the adenoviridae hexon-linking protein family. Interacts with the peripentonal hexons as well as the hexons in the facets. Part of a complex composed of the core-capsid bridging protein, the endosome lysis protein VI and the hexon-linking protein VIII; these interactions bridge the virus core to the capsid. Post-translationally, cleaved by the viral protease during virion maturation. May cause the middle segment to be shed from the capsid.

Its subcellular location is the virion. The protein resides in the host nucleus. Functionally, structural component of the virion that acts as a cement protein on the capsid interior and which glue the peripentonal hexons and group-of-nine hexons together. The chain is Pre-hexon-linking protein VIII from Homo sapiens (Human).